The following is a 433-amino-acid chain: KH domain-containing, RNA-binding, signal transduction-associated protein 1 (433 aa).

Positions 1 to 79 are disordered; the sequence is MQRRDDSSAR…PLLPGGAVKM (79 aa). A compositionally biased stretch (low complexity) spans 41–76; that stretch reads GAQHPQPLLTGGAAAGSSGAQGPAAANPAPLLPGGA. The involved in homodimerization stretch occupies residues 82–243; it reads ENKYLPELMA…VKKFLVPDMM (162 aa). Positions 171–197 constitute a KH domain; sequence QEETGAKISVLGKGSMRDKAKEEELRK. 3 disordered regions span residues 259-305, 317-351, and 403-433; these read GVPE…ALVR, AAVA…PPPP, and QDDW…YGRY. Residues 277–300 are compositionally biased toward pro residues; the sequence is APPPPPPVPRGRGVGPPPPPPPPR. Positions 329–342 are enriched in low complexity; it reads VRGAPAPRARAAGI. Residues 424–433 are compositionally biased toward basic and acidic residues; that stretch reads AYREHPYGRY.

This sequence belongs to the KHDRBS family. As to quaternary structure, self-associates to form homooligomers when bound to RNA, oligomerization appears to be limited when binding to proteins. Post-translationally, tyrosine phosphorylated by several non-receptor tyrosine kinases including LCK, FYN and JAK3. Acetylated. Positively correlates with ability to bind RNA. In terms of processing, methylated by HRMT1L2. Required for nuclear localization.

It is found in the nucleus. Its subcellular location is the cytoplasm. The protein localises to the membrane. Recruited and tyrosine phosphorylated by several receptor systems, for example the T-cell, leptin and insulin receptors. Once phosphorylated, functions as an adapter protein in signal transduction cascades by binding to SH2 and SH3 domain-containing proteins. Role in G2-M progression in the cell cycle. Represses CBP-dependent transcriptional activation apparently by competing with other nuclear factors for binding to CBP. Also acts as a putative regulator of mRNA stability and/or translation rates and mediates mRNA nuclear export. Plays a role in the regulation of alternative splicing and influences mRNA splice site selection and exon inclusion. This chain is KH domain-containing, RNA-binding, signal transduction-associated protein 1, found in Gallus gallus (Chicken).